The chain runs to 356 residues: MGFYRNLVLVAASCTQALGLCPAPRCDSPDIRHEWGELSREDRLSYISAVQCMKDRPPELSVEEVPAVRSRYDDFTAVHINYTLQIHNSGIFLPWHRHFIWLWEKALREECGFTGTLPYWDWVMWPNLAASPLFDGTETSLSGDGEFNATEQPTELNPEPGLTITIPRGAGGGCVRTGPFKDWVINMGPFAFNESYEPALPDHAFDYNPRCLVRSLNDWVIQTYNNQTVVDTLLDSPDIVEFQNIMGGFPNPPIPIGPHAMGHRSLGPDMLDFFASPQDPAFWQHHGMVDRLWTVWQDADEPWRRFALNGSSTTWYKDDTPEVTLQTTVEFGILDEPRPLYELMSPTAGPYCYTYT.

The N-terminal stretch at 1–19 is a signal peptide; that stretch reads MGFYRNLVLVAASCTQALG. Residue asparagine 81 is glycosylated (N-linked (GlcNAc...) asparagine). Cu cation contacts are provided by histidine 87 and histidine 96. N-linked (GlcNAc...) asparagine glycans are attached at residues asparagine 148 and asparagine 193. Histidine 203 contacts Cu cation. Asparagine 226 carries N-linked (GlcNAc...) asparagine glycosylation. 2 residues coordinate Cu cation: histidine 263 and histidine 286. Asparagine 309 is a glycosylation site (N-linked (GlcNAc...) asparagine).

Belongs to the tyrosinase family. Requires Cu(2+) as cofactor. In terms of processing, glycosylated.

The protein resides in the endoplasmic reticulum lumen. Its subcellular location is the golgi apparatus lumen. The enzyme catalyses aspulvinone E + O2 = (5Z)-3-(3,4-dihydroxyphenyl)-5-[(3,4-dihydroxyphenyl)methylidene]-5-oxo-2,5-dihydrofuran-3-olate. It carries out the reaction aspulvinone E + O2 = (2Z)-2-[(3,4-dioxocyclohexa-1,5-dien-1-yl)methylidene]-4-(4-hydroxyphenyl)-5-oxo-2,5-dihydrofuran-3-olate + H2O. Its activity is regulated as follows. Activity is inhibited by the presence of dithiothreitol (DTT). Tyrosinase; part of the gene cluster that mediates the biosynthesis of Asp-melanin, a pigment that confers resistance against UV light and hampers phagocytosis by soil amoeba. The nonribosomal peptide synthase melA converts 4-hydroxyphenylpyruvate (4-HPPA) to aspulvinone E. The tyrosinase tyrP then performs hydroxylations of both aromatic moieties of aspulvinone E. The product of tyrP is highly unstable, and, due to the high reactivity of methides and ortho-diquinones, the polymeric Asp-melanin forms spontaneously. The sequence is that of Tyrosinase P (tyrP) from Aspergillus terreus.